Consider the following 644-residue polypeptide: Threonine--tRNA ligase (644 aa).

The region spanning 1 to 61 is the TGS domain; that stretch reads MINVTLPDGS…DGDAQVAIIT (61 aa). Residues 243–536 are catalytic; the sequence is DHRKLGKQME…LIESYAGKLP (294 aa). Zn(2+) is bound by residues cysteine 336, histidine 387, and histidine 513.

This sequence belongs to the class-II aminoacyl-tRNA synthetase family. Homodimer. Zn(2+) is required as a cofactor.

The protein localises to the cytoplasm. The enzyme catalyses tRNA(Thr) + L-threonine + ATP = L-threonyl-tRNA(Thr) + AMP + diphosphate + H(+). In terms of biological role, catalyzes the attachment of threonine to tRNA(Thr) in a two-step reaction: L-threonine is first activated by ATP to form Thr-AMP and then transferred to the acceptor end of tRNA(Thr). Also edits incorrectly charged L-seryl-tRNA(Thr). The polypeptide is Threonine--tRNA ligase (Maricaulis maris (strain MCS10) (Caulobacter maris)).